An 862-amino-acid polypeptide reads, in one-letter code: MLLGGLIDTLTGANKSARLKGTVVLMRKNVLDLNDFGATIIDGIGEFLGKGVTCQLISSTAVDQDNGGRGKVGAEAELEQWVTSLPSLTTGESKFGLTFDWEVEKLGVPGAIVVNNYHSSEFLLKTITLHDVPGRSGNLTFVANSWIYPAANYRYSRVFFANDTYLPSQMPAALKPYRDDELRNLRGDDQQGPYQEHDRIYRYDVYNDLGEGRPILGGNSDHPYPRRGRTERKPNASDPSLESRLSLLEQIYVPRDEKFGHLKTSDFLGYSIKAITQGILPAVRTYVDTTPGEFDSFQDIINLYEGGIKLPKVAALEELRKQFPLQLIKDLLPVGGDSLLKLPVPHIIQENKQAWRTDEEFAREVLAGVNPVMITRLTEFPPKSSLDPSKFGDHTSTITAEHIEKNLEGLTVQQALESNRLYILDHHDRFMPFLIDVNNLPGNFIYATRTLFFLRGDGRLTPLAIELSEPIIQGGLTTAKSKVYTPVPSGSVEGWVWELAKAYVAVNDSGWHQLVSHWLNTHAVMEPFVISTNRHLSVTHPVHKLLSPHYRDTMTINALARQTLINAGGIFEMTVFPGKFALGMSAVVYKDWKFTEQGLPDDLIKRGMAVEDPSSPYKVRLLVSDYPYAADGLAIWHAIEQYVSEYLAIYYPNDGVLQGDTEVQAWWKETREVGHGDLKDAPWWPKMQSVPELAKACTTIIWIGSALHAAVNFGQYPYAGFLPNRPTVSRRRMPEPGTEEYAELERDPERAFIHTITSQIQTIIGVSLLEVLSKHSSDELYLGQRDTPEWTSDPKALEVFKRFSDRLVEIESKVVGMNHDPELKNRNGPAKFPYMLLYPNTSDHKGAAAGLTAKGIPNSISI.

A PLAT domain is found at 34-161 (NDFGATIIDG…NYRYSRVFFA (128 aa)). Positions 164–862 (TYLPSQMPAA…AKGIPNSISI (699 aa)) constitute a Lipoxygenase domain. Residues 212–241 (GRPILGGNSDHPYPRRGRTERKPNASDPSL) form a disordered region. Fe cation contacts are provided by histidine 517, histidine 522, histidine 708, asparagine 712, and isoleucine 862.

Belongs to the lipoxygenase family. Monomer. The cofactor is Fe cation.

It catalyses the reaction (9Z,12Z)-octadecadienoate + O2 = (9S)-hydroperoxy-(10E,12Z)-octadecadienoate. It functions in the pathway lipid metabolism; oxylipin biosynthesis. Its function is as follows. Plant lipoxygenase may be involved in a number of diverse aspects of plant physiology including growth and development, pest resistance, and senescence or responses to wounding. It catalyzes the hydroperoxidation of lipids containing a cis,cis-1,4-pentadiene structure. This chain is Linoleate 9S-lipoxygenase 1 (LOX1.1), found in Hordeum vulgare (Barley).